Consider the following 333-residue polypeptide: (2R)-3-sulfolactate dehydrogenase (NADP(+)) (333 aa).

Belongs to the LDH2/MDH2 oxidoreductase family.

The enzyme catalyses (2R)-3-sulfolactate + NADP(+) = 3-sulfopyruvate + NADPH + H(+). Its function is as follows. Catalyzes the reduction of sulfopyruvate to (R)-sulfolactate. Together with SlcC, provides a racemase system that converts (2S)-3-sulfolactate to (2R)-3-sulfolactate, which is degraded further by (2R)-sulfolactate sulfo-lyase. This chain is (2R)-3-sulfolactate dehydrogenase (NADP(+)) (comC), found in Chromohalobacter salexigens (strain ATCC BAA-138 / DSM 3043 / CIP 106854 / NCIMB 13768 / 1H11).